Here is a 311-residue protein sequence, read N- to C-terminus: Oxygen-dependent coproporphyrinogen-III oxidase (311 aa).

Ser93 is a binding site for substrate. His97 and His107 together coordinate a divalent metal cation. The active-site Proton donor is His107. Position 109 to 111 (109 to 111 (NVR)) interacts with substrate. 2 residues coordinate a divalent metal cation: His153 and His184. An important for dimerization region spans residues 252–287 (YVEFNLVFDRGTLFGLQSGGRTESILMSLPPVVKWR). A substrate-binding site is contributed by 270–272 (GGR).

The protein belongs to the aerobic coproporphyrinogen-III oxidase family. In terms of assembly, homodimer. The cofactor is a divalent metal cation.

It is found in the cytoplasm. The catalysed reaction is coproporphyrinogen III + O2 + 2 H(+) = protoporphyrinogen IX + 2 CO2 + 2 H2O. It functions in the pathway porphyrin-containing compound metabolism; protoporphyrin-IX biosynthesis; protoporphyrinogen-IX from coproporphyrinogen-III (O2 route): step 1/1. Its function is as follows. Involved in the heme biosynthesis. Catalyzes the aerobic oxidative decarboxylation of propionate groups of rings A and B of coproporphyrinogen-III to yield the vinyl groups in protoporphyrinogen-IX. The protein is Oxygen-dependent coproporphyrinogen-III oxidase of Aromatoleum aromaticum (strain DSM 19018 / LMG 30748 / EbN1) (Azoarcus sp. (strain EbN1)).